Here is a 413-residue protein sequence, read N- to C-terminus: Cell division protein FtsA (413 aa).

This sequence belongs to the FtsA/MreB family. In terms of assembly, self-interacts. Interacts with FtsZ.

It localises to the cell inner membrane. Its function is as follows. Cell division protein that is involved in the assembly of the Z ring. May serve as a membrane anchor for the Z ring. This is Cell division protein FtsA from Borreliella burgdorferi (strain ATCC 35210 / DSM 4680 / CIP 102532 / B31) (Borrelia burgdorferi).